An 872-amino-acid polypeptide reads, in one-letter code: Alanine--tRNA ligase (872 aa).

Residues His-567, His-571, Cys-669, and His-673 each coordinate Zn(2+).

Belongs to the class-II aminoacyl-tRNA synthetase family. Requires Zn(2+) as cofactor.

Its subcellular location is the cytoplasm. The catalysed reaction is tRNA(Ala) + L-alanine + ATP = L-alanyl-tRNA(Ala) + AMP + diphosphate. Functionally, catalyzes the attachment of alanine to tRNA(Ala) in a two-step reaction: alanine is first activated by ATP to form Ala-AMP and then transferred to the acceptor end of tRNA(Ala). Also edits incorrectly charged Ser-tRNA(Ala) and Gly-tRNA(Ala) via its editing domain. This Streptococcus pyogenes serotype M12 (strain MGAS2096) protein is Alanine--tRNA ligase.